We begin with the raw amino-acid sequence, 170 residues long: Photosystem II extrinsic protein V (170 aa).

A signal peptide spans 1–33 (MASLFASLGRSLIKLLIVLPVIIGLSISSPAMA). Residues Cys-70, Cys-73, His-74, and His-125 each coordinate heme c.

Belongs to the cytochrome c family. PsbV subfamily. In terms of assembly, PSII is composed of 1 copy each of membrane proteins PsbA, PsbB, PsbC, PsbD, PsbE, PsbF, PsbH, PsbI, PsbJ, PsbK, PsbL, PsbM, PsbT, PsbX, PsbY, Psb30/Ycf12, peripheral proteins PsbO, CyanoQ (PsbQ), PsbU, PsbV and a large number of cofactors. It forms dimeric complexes. Heme c serves as cofactor.

Its subcellular location is the cellular thylakoid membrane. In terms of biological role, one of the extrinsic, lumenal subunits of photosystem II (PSII). PSII is a light-driven water plastoquinone oxidoreductase, using light energy to abstract electrons from H(2)O, generating a proton gradient subsequently used for ATP formation. The extrinsic proteins stabilize the structure of photosystem II oxygen-evolving complex (OEC), the ion environment of oxygen evolution and protect the OEC against heat-induced inactivation. Low-potential cytochrome c that plays a role in the OEC of PSII. This is Photosystem II extrinsic protein V from Prochlorococcus marinus (strain MIT 9303).